The chain runs to 1613 residues: NAD-specific glutamate dehydrogenase (1613 aa).

Residue Lys849 is part of the active site.

It belongs to the Glu/Leu/Phe/Val dehydrogenases family.

The enzyme catalyses L-glutamate + NAD(+) + H2O = 2-oxoglutarate + NH4(+) + NADH + H(+). Functionally, involved in arginine catabolism by converting L-glutamate, into 2-oxoglutarate, which is then channeled into the tricarboxylic acid cycle. This Halomonas elongata (strain ATCC 33173 / DSM 2581 / NBRC 15536 / NCIMB 2198 / 1H9) protein is NAD-specific glutamate dehydrogenase.